Reading from the N-terminus, the 188-residue chain is dCTP deaminase (188 aa).

DCTP contacts are provided by residues 111–116 (KSTYAR), 135–137 (TLE), glutamine 156, tyrosine 170, and glutamine 180. The active-site Proton donor/acceptor is the glutamate 137.

It belongs to the dCTP deaminase family. In terms of assembly, homotrimer.

It catalyses the reaction dCTP + H2O + H(+) = dUTP + NH4(+). It participates in pyrimidine metabolism; dUMP biosynthesis; dUMP from dCTP (dUTP route): step 1/2. Catalyzes the deamination of dCTP to dUTP. The sequence is that of dCTP deaminase from Thiobacillus denitrificans (strain ATCC 25259 / T1).